The primary structure comprises 430 residues: Tol-Pal system protein TolB (430 aa).

The first 21 residues, 1 to 21 (MKQAFRLMVGLLVLWASVLHA), serve as a signal peptide directing secretion.

It belongs to the TolB family. As to quaternary structure, the Tol-Pal system is composed of five core proteins: the inner membrane proteins TolA, TolQ and TolR, the periplasmic protein TolB and the outer membrane protein Pal. They form a network linking the inner and outer membranes and the peptidoglycan layer.

The protein resides in the periplasm. In terms of biological role, part of the Tol-Pal system, which plays a role in outer membrane invagination during cell division and is important for maintaining outer membrane integrity. TolB occupies a key intermediary position in the Tol-Pal system because it communicates directly with both membrane-embedded components, Pal in the outer membrane and TolA in the inner membrane. The protein is Tol-Pal system protein TolB of Edwardsiella ictaluri (strain 93-146).